The chain runs to 490 residues: ATP synthase subunit alpha 1 (490 aa).

The protein belongs to the ATPase alpha/beta chains family. In terms of assembly, F-type ATPases have 2 components, CF(1) - the catalytic core - and CF(0) - the membrane proton channel. CF(1) has five subunits: alpha(3), beta(3), gamma(1), delta(1), epsilon(1). CF(0) has three main subunits: a(1), b(2) and c(9-12). The alpha and beta chains form an alternating ring which encloses part of the gamma chain. CF(1) is attached to CF(0) by a central stalk formed by the gamma and epsilon chains, while a peripheral stalk is formed by the delta and b chains.

The protein localises to the cell inner membrane. It catalyses the reaction ATP + H2O + 4 H(+)(in) = ADP + phosphate + 5 H(+)(out). In terms of biological role, produces ATP from ADP in the presence of a proton gradient across the membrane. The alpha chain is a regulatory subunit. This Legionella pneumophila (strain Paris) protein is ATP synthase subunit alpha 1.